We begin with the raw amino-acid sequence, 142 residues long: Protein E6 (142 aa).

2 zinc fingers span residues 30–66 (CVFC…CTPC) and 103–139 (CFDC…CRNC).

Belongs to the papillomaviridae E6 protein family. In terms of assembly, forms homodimers. Interacts with ubiquitin-protein ligase UBE3A/E6-AP; this interaction stimulates UBE3A ubiquitin activity. Interacts with host BAK1.

The protein resides in the host cytoplasm. The protein localises to the host nucleus. Plays a major role in the induction and maintenance of cellular transformation. E6 associates with host UBE3A/E6-AP ubiquitin-protein ligase and modulates its activity. Protects host keratinocytes from apoptosis by mediating the degradation of host BAK1. May also inhibit host immune response. The polypeptide is Protein E6 (Homo sapiens (Human)).